A 29-amino-acid chain; its full sequence is Cytochrome b6-f complex subunit 8 (29 aa).

The helical transmembrane segment at Ile-3–Val-23 threads the bilayer.

This sequence belongs to the PetN family. As to quaternary structure, the 4 large subunits of the cytochrome b6-f complex are cytochrome b6, subunit IV (17 kDa polypeptide, PetD), cytochrome f and the Rieske protein, while the 4 small subunits are PetG, PetL, PetM and PetN. The complex functions as a dimer.

The protein localises to the plastid. Its subcellular location is the chloroplast thylakoid membrane. Functionally, component of the cytochrome b6-f complex, which mediates electron transfer between photosystem II (PSII) and photosystem I (PSI), cyclic electron flow around PSI, and state transitions. This Zygnema circumcarinatum (Green alga) protein is Cytochrome b6-f complex subunit 8.